Here is a 582-residue protein sequence, read N- to C-terminus: Phosphoribosylaminoimidazole carboxylase (582 aa).

The ATP-grasp domain occupies 114-305 (KKYLAERGVA…QFENHLRAIL (192 aa)). Position 143 to 200 (143 to 200 (AGRLGLPLMLKAKTLAYDGRGNSPLKSASSEDIQASLKFLGDRPLYAEGWAPFVKEVA)) interacts with ATP.

In the C-terminal section; belongs to the AIR carboxylase family. Class I subfamily.

It catalyses the reaction 5-amino-1-(5-phospho-D-ribosyl)imidazole-4-carboxylate + H(+) = 5-amino-1-(5-phospho-beta-D-ribosyl)imidazole + CO2. The protein operates within purine metabolism; IMP biosynthesis via de novo pathway; 5-amino-1-(5-phospho-D-ribosyl)imidazole-4-carboxylate from 5-amino-1-(5-phospho-D-ribosyl)imidazole (carboxylase route): step 1/1. The sequence is that of Phosphoribosylaminoimidazole carboxylase (ADE2) from Cryptococcus neoformans var. neoformans serotype D (strain B-3501A) (Filobasidiella neoformans).